Consider the following 1145-residue polypeptide: DNA polymerase subunit gamma-1, mitochondrial (1145 aa).

A mitochondrion-targeting transit peptide spans 1–9 (MQFHLIRKY).

It belongs to the DNA polymerase type-A family. In terms of assembly, component of the DNA polymerase gamma complex consisting of two subunits: the catalytic subunit DNApol-gamma/DNApolG1 and the accessory subunit PolG2/DNApol-gamma35. The cofactor is Mg(2+).

The protein resides in the mitochondrion. It carries out the reaction DNA(n) + a 2'-deoxyribonucleoside 5'-triphosphate = DNA(n+1) + diphosphate. With respect to regulation, stimulated by KCl, and inhibited by the small molecules o 2',3'-dideoxythymidine 5'-triphosphate (d2TTP) and N-ethylmaleimide (NEM). Functionally, as the catalytic component of the DNA polymerase gamma complex is involved in the replication of mitochondrial DNA (mtDNA). Has both 5'-3' DNA polymerase and a highly mispair-specific 3'-5' exonuclease activity. At the end of mtDNA replication DNA ends are ligated to produce a closed circular mtDNA molecule, its exonuclease activity is required for formation of these ligatable ends by preventing DNA synthesis from continuing past the 5'-end of downstream DNA into duplex DNA regions. Does not possess DNA primase activity, does not catalyze strand displacement synthesis and does not contain a 5'-3' exonuclease activity to catalyze nick translation. Important for promoting the elimination of paternal mitochondrial DNA during spermatogenesis, however its exact role in this function has not yet been identified and appears to be independent of its 3'-5'-exonuclease activity and only partially dependent on its DNA polymerase activity. The polypeptide is DNA polymerase subunit gamma-1, mitochondrial (Drosophila melanogaster (Fruit fly)).